Reading from the N-terminus, the 145-residue chain is Ponticulin-like protein B (145 aa).

Residues 1-22 form the signal peptide; sequence MLFIKSLLLLLSLIFAVSNATG. Asn34 carries N-linked (GlcNAc...) asparagine glycosylation. The interval 107–126 is disordered; that stretch reads DTTSSSTSPSSTSPSSTSPA. A compositionally biased stretch (low complexity) spans 108 to 126; it reads TTSSSTSPSSTSPSSTSPA. Residue Ser117 is the site of GPI-like-anchor amidated serine attachment. Residues 118–145 constitute a propeptide, removed in mature form; sequence TSPSSTSPASTLIGSIAFVTLAALFALI.

Belongs to the ponticulin family. In terms of processing, the GPI-like-anchor contains a phosphoceramide group, rather than a phosphatidyl group.

The protein localises to the cell membrane. Binds F-actin and nucleates actin assembly. In Dictyostelium discoideum (Social amoeba), this protein is Ponticulin-like protein B (ponB).